A 198-amino-acid polypeptide reads, in one-letter code: A-type ATP synthase subunit E (198 aa).

The protein belongs to the V-ATPase E subunit family. Has multiple subunits with at least A(3), B(3), C, D, E, F, H, I and proteolipid K(x).

It localises to the cell membrane. Functionally, component of the A-type ATP synthase that produces ATP from ADP in the presence of a proton gradient across the membrane. This chain is A-type ATP synthase subunit E, found in Pyrococcus furiosus (strain ATCC 43587 / DSM 3638 / JCM 8422 / Vc1).